A 565-amino-acid polypeptide reads, in one-letter code: Adenine deaminase (565 aa).

It belongs to the metallo-dependent hydrolases superfamily. Adenine deaminase family. It depends on Mn(2+) as a cofactor.

It catalyses the reaction adenine + H2O + H(+) = hypoxanthine + NH4(+). The chain is Adenine deaminase from Cereibacter sphaeroides (strain ATCC 17025 / ATH 2.4.3) (Rhodobacter sphaeroides).